A 1085-amino-acid polypeptide reads, in one-letter code: Voltage-dependent calcium channel subunit alpha-2/delta-3 (1085 aa).

A signal peptide spans M1–S33. Over E34–G1062 the chain is Extracellular. N-linked (GlcNAc...) asparagine glycosylation occurs at N166. The VWFA domain maps to D256–L438. Residues D262, S264, and S266 each contribute to the a divalent metal cation site. The short motif at D262–S266 is the MIDAS-like motif element. An N-linked (GlcNAc...) asparagine glycan is attached at N309. C412 and C1049 are oxidised to a cystine. One can recognise a Cache domain in the interval W452–R543. Residues N547 and N626 are each glycosylated (N-linked (GlcNAc...) asparagine). Y918 carries the post-translational modification Phosphotyrosine. The chain crosses the membrane as a helical span at residues G1063–F1083. The Cytoplasmic portion of the chain corresponds to S1084–R1085.

It belongs to the calcium channel subunit alpha-2/delta family. Dimer formed of alpha-2-2 and delta-2 chains; disulfide-linked. Voltage-dependent calcium channels are multisubunit complexes, consisting of alpha-1 (CACNA1), alpha-2 (CACNA2D), beta (CACNB) and delta (CACNA2D) subunits in a 1:1:1:1 ratio. Post-translationally, N-glycosylated. May be proteolytically processed into subunits alpha-2-3 and delta-3 that are disulfide-linked. It is however unclear whether such cleavage really takes place in vivo and has a functional role. In heart, it is expressed in atrium but not in ventricle.

The protein localises to the membrane. Functionally, the alpha-2/delta subunit of voltage-dependent calcium channels regulates calcium current density and activation/inactivation kinetics of the calcium channel. Acts as a regulatory subunit for P/Q-type calcium channel (CACNA1A), N-type (CACNA1B), L-type (CACNA1C OR CACNA1D) but not T-type (CACNA1G). The sequence is that of Voltage-dependent calcium channel subunit alpha-2/delta-3 (Cacna2d3) from Rattus norvegicus (Rat).